Here is a 50-residue protein sequence, read N- to C-terminus: Sperm protamine P1 (50 aa).

It belongs to the protamine P1 family. Cross-linked by interchain disulfide bonds around the DNA-helix. Testis.

It is found in the nucleus. Its subcellular location is the chromosome. In terms of biological role, protamines substitute for histones in the chromatin of sperm during the haploid phase of spermatogenesis. They compact sperm DNA into a highly condensed, stable and inactive complex. The chain is Sperm protamine P1 (PRM1) from Pan paniscus (Pygmy chimpanzee).